Consider the following 344-residue polypeptide: MTSREGRAPLARRAVVYGVVGLAAIAGVAMWSGAGWHRATGASGESPEASVAGGSVTAPPQAAVPASTGLPPSLAGSSAPRLPLDAGGHLAKSRAVRDFFDYCLTAQSDLSAAGLDAFVMREIAAQLDGTVAQAEALDVWHRYRAYLDALAKLRDAGAADKSDLGALQLALDQRASIAYRTLGDWSQPFFGAEQWRQRYDLARLKIAQDPTLTDAQKAERLAALEQQMPADERAAQQHIDQQRAAIDQIAQLQKSGATPDAMRAQLTQTLGPEAAARVAQMQQDDASWQSRYADYAAQRTQIESAGLSPQDRDAQIAALRQRVFTRPGEAVRAASLDRGAGSAR.

A helical membrane pass occupies residues Ala-14 to Ala-34. A disordered region spans residues Ala-39–Ser-78.

The protein belongs to the lipase chaperone family.

It localises to the cell inner membrane. In terms of biological role, may be involved in the folding of the extracellular lipase during its passage through the periplasm. This chain is Lipase chaperone (lifO), found in Pseudomonas sp. (strain KWI-56).